The primary structure comprises 643 residues: Fructose-1,6-bisphosphatase class 3 (643 aa).

It belongs to the FBPase class 3 family. Requires Mn(2+) as cofactor.

The catalysed reaction is beta-D-fructose 1,6-bisphosphate + H2O = beta-D-fructose 6-phosphate + phosphate. It functions in the pathway carbohydrate biosynthesis; gluconeogenesis. The polypeptide is Fructose-1,6-bisphosphatase class 3 (Streptococcus agalactiae serotype Ia (strain ATCC 27591 / A909 / CDC SS700)).